A 569-amino-acid polypeptide reads, in one-letter code: Matrix metalloproteinase-21 (569 aa).

An N-terminal signal peptide occupies residues 1 to 24 (MLAASIFRPTLLLCWLAAPWPTQP). Residues 25–144 (ESLFHSRDRS…GPPPRARSRR (120 aa)) constitute a propeptide that is removed on maturation. The Cysteine switch motif lies at 115 to 122 (PRCGVPDM). Residues 115–166 (PRCGVPDMRPPPPSAPPSPPGPPPRARSRRSPRAPLSLSRRGWQPRGYPDGG) are disordered. Cysteine 117 provides a ligand contact to Zn(2+). The segment covering 122-139 (MRPPPPSAPPSPPGPPPR) has biased composition (pro residues). Residues 147-156 (RAPLSLSRRG) are compositionally biased toward low complexity. Position 283 (histidine 283) interacts with Zn(2+). Glutamate 284 is a catalytic residue. Positions 287 and 293 each coordinate Zn(2+). Cysteines 329 and 560 form a disulfide. 4 Hemopexin repeats span residues 330 to 389 (EGSF…WPGI), 391 to 447 (THNI…FPGI), 448 to 496 (PSPL…FPAV), and 503 to 559 (FRNI…WFDV). Asparagine 372 carries an N-linked (GlcNAc...) asparagine glycan.

Belongs to the peptidase M10A family. The cofactor is Zn(2+). Requires Ca(2+) as cofactor. The precursor is cleaved by a furin endopeptidase. As to expression, identified in fetal brain, kidney and liver. In adult tissues found primarily in ovary, kidney, liver, lung, placenta, brain and peripheral blood leukocytes. Expressed as well in various cancer cell lines.

It is found in the secreted. Functionally, plays a specialized role in the generation of left-right asymmetry during embryogenesis. May act as a negative regulator of the NOTCH-signaling pathway. Cleaves alpha-1-antitrypsin. The chain is Matrix metalloproteinase-21 (MMP21) from Homo sapiens (Human).